Reading from the N-terminus, the 81-residue chain is Insulin-like growth factor 1 (81 aa).

Residues 1 to 4 (FASA) constitute a propeptide that is removed on maturation. Residues 5 to 33 (GPETLCGAELVDALQFVCGDRGFYFNKPT) form a b region. 3 cysteine pairs are disulfide-bonded: Cys-10/Cys-52, Cys-22/Cys-65, and Cys-51/Cys-56. The tract at residues 34–45 (GYGSSSRRAPQT) is c. Residues 46 to 66 (GIVDECCFRSCDLRRLEMYCA) form an a region. The interval 67–74 (PLKPAKAA) is d. Residues 75 to 81 (RSVRAQR) constitute a propeptide, e peptide.

The protein belongs to the insulin family. As to quaternary structure, forms a ternary complex with IGFR1 and ITGAV:ITGB3. Forms a ternary complex with IGFR1 and ITGA6:ITGB4.

It localises to the secreted. Functionally, the insulin-like growth factors, isolated from plasma, are structurally and functionally related to insulin but have a much higher growth-promoting activity. May be a physiological regulator of [1-14C]-2-deoxy-D-glucose (2DG) transport and glycogen synthesis in osteoblasts. Stimulates glucose transport in bone-derived osteoblastic (PyMS) cells and is effective at much lower concentrations than insulin, not only regarding glycogen and DNA synthesis but also with regard to enhancing glucose uptake. May play a role in synapse maturation. Ca(2+)-dependent exocytosis of IGF1 is required for sensory perception of smell in the olfactory bulb. Acts as a ligand for IGF1R. Binds to the alpha subunit of IGF1R, leading to the activation of the intrinsic tyrosine kinase activity which autophosphorylates tyrosine residues in the beta subunit thus initiating a cascade of down-stream signaling events leading to activation of the PI3K-AKT/PKB and the Ras-MAPK pathways. Binds to integrins ITGAV:ITGB3 and ITGA6:ITGB4. Its binding to integrins and subsequent ternary complex formation with integrins and IGFR1 are essential for IGF1 signaling. Induces the phosphorylation and activation of IGFR1, MAPK3/ERK1, MAPK1/ERK2 and AKT1. As part of the MAPK/ERK signaling pathway, acts as a negative regulator of apoptosis in cardiomyocytes via promotion of STUB1/CHIP-mediated ubiquitination and degradation of ICER-type isoforms of CREM. The chain is Insulin-like growth factor 1 from Suncus murinus (Asian house shrew).